The sequence spans 166 residues: Altered inheritance of mitochondria protein 11 (166 aa).

2 helical membrane-spanning segments follow: residues 35 to 52 (MLFM…RLAY) and 81 to 103 (AAVA…IFGT).

This sequence belongs to the AIM11 family.

Its subcellular location is the membrane. This Debaryomyces hansenii (strain ATCC 36239 / CBS 767 / BCRC 21394 / JCM 1990 / NBRC 0083 / IGC 2968) (Yeast) protein is Altered inheritance of mitochondria protein 11 (AIM11).